The chain runs to 341 residues: Anthranilate phosphoribosyltransferase (341 aa).

Residues Gly-79, 82-83, Thr-87, 89-92, 107-115, and Ala-119 each bind 5-phospho-alpha-D-ribose 1-diphosphate; these read GD, NIST, and KHGNRAASS. Anthranilate is bound at residue Gly-79. Position 91 (Ser-91) interacts with Mg(2+). Asn-110 serves as a coordination point for anthranilate. Arg-165 lines the anthranilate pocket. Residues Asp-224 and Glu-225 each coordinate Mg(2+).

It belongs to the anthranilate phosphoribosyltransferase family. As to quaternary structure, homodimer. The cofactor is Mg(2+).

The enzyme catalyses N-(5-phospho-beta-D-ribosyl)anthranilate + diphosphate = 5-phospho-alpha-D-ribose 1-diphosphate + anthranilate. Its pathway is amino-acid biosynthesis; L-tryptophan biosynthesis; L-tryptophan from chorismate: step 2/5. In terms of biological role, catalyzes the transfer of the phosphoribosyl group of 5-phosphorylribose-1-pyrophosphate (PRPP) to anthranilate to yield N-(5'-phosphoribosyl)-anthranilate (PRA). This Lacticaseibacillus paracasei (strain ATCC 334 / BCRC 17002 / CCUG 31169 / CIP 107868 / KCTC 3260 / NRRL B-441) (Lactobacillus paracasei) protein is Anthranilate phosphoribosyltransferase.